The following is a 425-amino-acid chain: Serine--tRNA ligase (425 aa).

230–232 (TAE) contributes to the L-serine binding site. 261-263 (RSE) contributes to the ATP binding site. Glu-284 serves as a coordination point for L-serine. 348–351 (EISS) is an ATP binding site. L-serine is bound at residue Ser-383.

This sequence belongs to the class-II aminoacyl-tRNA synthetase family. Type-1 seryl-tRNA synthetase subfamily. In terms of assembly, homodimer. The tRNA molecule binds across the dimer.

The protein localises to the cytoplasm. It carries out the reaction tRNA(Ser) + L-serine + ATP = L-seryl-tRNA(Ser) + AMP + diphosphate + H(+). The catalysed reaction is tRNA(Sec) + L-serine + ATP = L-seryl-tRNA(Sec) + AMP + diphosphate + H(+). Its pathway is aminoacyl-tRNA biosynthesis; selenocysteinyl-tRNA(Sec) biosynthesis; L-seryl-tRNA(Sec) from L-serine and tRNA(Sec): step 1/1. In terms of biological role, catalyzes the attachment of serine to tRNA(Ser). Is also able to aminoacylate tRNA(Sec) with serine, to form the misacylated tRNA L-seryl-tRNA(Sec), which will be further converted into selenocysteinyl-tRNA(Sec). The chain is Serine--tRNA ligase from Ligilactobacillus salivarius (strain UCC118) (Lactobacillus salivarius).